Reading from the N-terminus, the 415-residue chain is Queuine tRNA-ribosyltransferase accessory subunit 2 (415 aa).

Zn(2+) contacts are provided by C351, C353, C356, and H382.

The protein belongs to the queuine tRNA-ribosyltransferase family. QTRT2 subfamily. As to quaternary structure, heterodimer of a catalytic subunit QTRT1 and an accessory subunit QTRT2. Requires Zn(2+) as cofactor.

It localises to the cytoplasm. Its subcellular location is the mitochondrion outer membrane. In terms of biological role, non-catalytic subunit of the queuine tRNA-ribosyltransferase (TGT) that catalyzes the base-exchange of a guanine (G) residue with queuine (Q) at position 34 (anticodon wobble position) in tRNAs with GU(N) anticodons (tRNA-Asp, -Asn, -His and -Tyr), resulting in the hypermodified nucleoside queuosine (7-(((4,5-cis-dihydroxy-2-cyclopenten-1-yl)amino)methyl)-7-deazaguanosine). The sequence is that of Queuine tRNA-ribosyltransferase accessory subunit 2 from Pongo abelii (Sumatran orangutan).